The primary structure comprises 1205 residues: MGRENELIQAVKSGDVGAVQKFLAKFRTPKSKLLGSTKRLNVNHQDADGFSALHHAALSGNSELLLLLLEMQASVDIKDGNGMRPLHYAAWQGQPEPVRLLLRASASVNAASHDGQIPLHLAAQYGHYEVSETLLQHQSNPCHVNKGKKTPLDLACEFGRVKVVQLLLNSHLCVSLLEGTSKDPTDPNFTTPLHLAAKNGHLEVIRLLLKLGIEINKVTKMGTALHEAALCGKTEVVKLLIENGVDVNIRNTYNQTALDIVNQFTTTHASIDIKQLLREASGILKVRALKDFWNAHDPTALNIRAGDLITVLEQHPDGRWKGHIHDPQKGTDRVGFFPPSIVEVISKRLGSTLSRNITVPSHQHLAKTVLTLPIQHSPGSQLGINPDTSVAGDRHSVGSESSVRSAGSGQSCEGQQINTALLIENAQTMDFGSENLQNCQTFPGPVSGHHLSTILPVEKNPGDYLQGKDAEQIFCWLRGFQMETYVGNFISAGYDLPTIMRVTPEDLTAIGVTKPGHRKMISTEIGKLIVADGLPQQIPVDLWDWLSQLGLPEYHKQLSENGYESLSTVTELTWEGLQEIGIHRLGHQKKLLLGVKRLLDLQKGYPIGGTLRRRILGSQDTVAVVEPPENGDLPVTPKLLTFQGAELSQELQSALTRGNEQLCTGRRSFSQESISSRSQGSGHSQESASSYPVLPVHLQGVDLNLPERNHPEGTDQILQNHWVPNGCLIQPEPPAPPPKPALKKRSLSACRYALSDGEPEEEEEKKIATAGTGTLSTYATLTRRPGRSCLTNGKPEKKVQRSQSFAVRARRKGPPPPPPKRLSSMSSAEGQSPEGQSSVKTIAAQLKDIGRGTGFSASTSKATDTEVLEGSGTRRRTVSESAAGLGGRLSLPLTTKKDEEEERKEEPISSQHSSSESIPFAEEGNLTIKQRPKPPGAKLEQDATSELSPTQESQLQSAEAQRHLESSAVLAKPVTVVLAQARPQIAAKPQIGPKPDTGARAPPATSIPKNEEHDFNLTESDTVKRRPKVKEKEEESPKAPLANNSPSLIPSQEPLTQDTLIAKIADIDKRLLSLGEVEDSVKKTGIDTRSTGVSISQTHLVISGPQQVLQKPSRAVTGPLFPAGSILWDEESEASSREQTCIPQQSISNSDKGPPVFTSSLQNTEELQDTRGKSCRETVQLTKNILDDISTMFDDLAEQLEAMLD.

ANK repeat units follow at residues 48–77, 81–110, 114–143, 147–176, 188–217, and 220–249; these read DGFS…SVDI, NGMR…SVNA, DGQI…NPCH, GKKT…CVSL, NFTT…EINK, and KMGT…DVNI. In terms of domain architecture, SH3 spans 281–347; that stretch reads SGILKVRALK…PPSIVEVISK (67 aa). 2 stretches are compositionally biased toward polar residues: residues 377–388 and 398–411; these read SPGSQLGINPDT and GSES…SGQS. A disordered region spans residues 377–411; it reads SPGSQLGINPDTSVAGDRHSVGSESSVRSAGSGQS. SAM domains follow at residues 468–531 and 537–601; these read KDAE…LIVA and QIPV…LLDL. Residues 666–687 are compositionally biased toward low complexity; it reads RRSFSQESISSRSQGSGHSQES. Disordered stretches follow at residues 666–689, 784–964, 984–1054, and 1132–1155; these read RRSF…ESAS, RPGR…QRHL, QIAA…SQEP, and SEAS…KGPP. Polar residues predominate over residues 823 to 840; sequence SSMSSAEGQSPEGQSSVK. Residues 908-919 show a composition bias toward low complexity; that stretch reads ISSQHSSSESIP. The segment covering 942–959 has biased composition (polar residues); sequence DATSELSPTQESQLQSAE. Basic and acidic residues predominate over residues 1009–1037; sequence KNEEHDFNLTESDTVKRRPKVKEKEEESP. Composition is skewed to polar residues over residues 1042–1054 and 1137–1155; these read ANNS…SQEP and REQT…KGPP.

The sequence is that of Caskin-2 (caskin2) from Xenopus laevis (African clawed frog).